A 212-amino-acid polypeptide reads, in one-letter code: Fibrillarin-like rRNA/tRNA 2'-O-methyltransferase (212 aa).

The interval 1 to 37 (MSEPNLPAGVERREIGGETRLATRGPPVYGEPTADGW) is disordered. S-adenosyl-L-methionine-binding positions include 74-75 (TT), 90-91 (EF), 115-116 (DA), and 136-139 (DVAT).

Belongs to the methyltransferase superfamily. Fibrillarin family. Interacts with nop5. Component of box C/D small ribonucleoprotein (sRNP) particles that contain rpl7ae, FlpA and nop5, plus a guide RNA.

Its function is as follows. Involved in pre-rRNA and tRNA processing. Utilizes the methyl donor S-adenosyl-L-methionine to catalyze the site-specific 2'-hydroxyl methylation of ribose moieties in rRNA and tRNA. Site specificity is provided by a guide RNA that base pairs with the substrate. Methylation occurs at a characteristic distance from the sequence involved in base pairing with the guide RNA. The chain is Fibrillarin-like rRNA/tRNA 2'-O-methyltransferase from Halorubrum lacusprofundi (strain ATCC 49239 / DSM 5036 / JCM 8891 / ACAM 34).